A 261-amino-acid chain; its full sequence is Cytochrome c oxidase subunit 3 (261 aa).

At 1–15 (MAHQAHAYHMVDPSP) the chain is on the mitochondrial matrix side. A helical transmembrane segment spans residues 16 to 34 (WPLTGAIAALLLTSGTAVW). The Mitochondrial intermembrane segment spans residues 35-40 (FHFHSL). Residues 41 to 66 (TLLTMGNILLLLTMYQWWRDIIREGT) form a helical membrane-spanning segment. The Mitochondrial matrix segment spans residues 67–72 (FQGHHT). Residues 73–105 (PPVQKGLRYGMILFITSEVFFFLGFFWAFYHSS) form a helical membrane-spanning segment. The Mitochondrial intermembrane segment spans residues 106–128 (LSPTPELGGCWPPTGIITLDPFE). Residues 129 to 152 (VPLLNTAVLLASGVTVTWAHHSIM) form a helical membrane-spanning segment. The Mitochondrial matrix portion of the chain corresponds to 153 to 155 (EGE). A helical membrane pass occupies residues 156-183 (RKQTIQALTLTILLGFYFTFLQGMEYYE). Over 184–190 (APFTIAD) the chain is Mitochondrial intermembrane. Residues 191–223 (GVYGSTFFVATGFHGLHVIIGSTFLAICLLRQI) traverse the membrane as a helical segment. Residues 224–232 (QYHFTSEHH) lie on the Mitochondrial matrix side of the membrane. The chain crosses the membrane as a helical span at residues 233 to 256 (FGFEAAAWYWHFVDVVWLFLYVSI). Residues 257–261 (YWWGS) lie on the Mitochondrial intermembrane side of the membrane.

It belongs to the cytochrome c oxidase subunit 3 family. Component of the cytochrome c oxidase (complex IV, CIV), a multisubunit enzyme composed of 14 subunits. The complex is composed of a catalytic core of 3 subunits MT-CO1, MT-CO2 and MT-CO3, encoded in the mitochondrial DNA, and 11 supernumerary subunits COX4I, COX5A, COX5B, COX6A, COX6B, COX6C, COX7A, COX7B, COX7C, COX8 and NDUFA4, which are encoded in the nuclear genome. The complex exists as a monomer or a dimer and forms supercomplexes (SCs) in the inner mitochondrial membrane with NADH-ubiquinone oxidoreductase (complex I, CI) and ubiquinol-cytochrome c oxidoreductase (cytochrome b-c1 complex, complex III, CIII), resulting in different assemblies (supercomplex SCI(1)III(2)IV(1) and megacomplex MCI(2)III(2)IV(2)).

It is found in the mitochondrion inner membrane. The catalysed reaction is 4 Fe(II)-[cytochrome c] + O2 + 8 H(+)(in) = 4 Fe(III)-[cytochrome c] + 2 H2O + 4 H(+)(out). Component of the cytochrome c oxidase, the last enzyme in the mitochondrial electron transport chain which drives oxidative phosphorylation. The respiratory chain contains 3 multisubunit complexes succinate dehydrogenase (complex II, CII), ubiquinol-cytochrome c oxidoreductase (cytochrome b-c1 complex, complex III, CIII) and cytochrome c oxidase (complex IV, CIV), that cooperate to transfer electrons derived from NADH and succinate to molecular oxygen, creating an electrochemical gradient over the inner membrane that drives transmembrane transport and the ATP synthase. Cytochrome c oxidase is the component of the respiratory chain that catalyzes the reduction of oxygen to water. Electrons originating from reduced cytochrome c in the intermembrane space (IMS) are transferred via the dinuclear copper A center (CU(A)) of subunit 2 and heme A of subunit 1 to the active site in subunit 1, a binuclear center (BNC) formed by heme A3 and copper B (CU(B)). The BNC reduces molecular oxygen to 2 water molecules using 4 electrons from cytochrome c in the IMS and 4 protons from the mitochondrial matrix. This is Cytochrome c oxidase subunit 3 (mt-co3) from Salmo salar (Atlantic salmon).